The chain runs to 238 residues: Small ribosomal subunit protein uS2c (238 aa).

This sequence belongs to the universal ribosomal protein uS2 family.

It is found in the plastid. The protein localises to the chloroplast. In Jasminum nudiflorum (Winter jasmine), this protein is Small ribosomal subunit protein uS2c (rps2).